The sequence spans 102 residues: Small ribosomal subunit protein uS10 (102 aa).

This sequence belongs to the universal ribosomal protein uS10 family. In terms of assembly, part of the 30S ribosomal subunit.

Involved in the binding of tRNA to the ribosomes. This is Small ribosomal subunit protein uS10 from Pyrococcus abyssi (strain GE5 / Orsay).